We begin with the raw amino-acid sequence, 220 residues long: NVDFDSESPRKPEIQNEIIDLHNSLRRSVNPTASNMLRMEWYPEAAANAERWAFRCTLNHSPRDSRVIDGIKCGENIYMSPYPIKWTAIIHKWHDEKKNFVYGIGASPANAVIGHYTQIVWYKSYRGGCAAAYCPSSAYKYFYVCQYCPAGNIIGKTATPYKSGPPCGDCPSACDNGLCTNPCTREDEFINCNDLVKQGCQTDYLKSNCAASCFCHSEIK.

The SCP domain maps to 20-147 (DLHNSLRRSV…AYKYFYVCQY (128 aa)). 8 disulfide bridges follow: cysteine 56–cysteine 134, cysteine 73–cysteine 148, cysteine 129–cysteine 145, cysteine 167–cysteine 174, cysteine 170–cysteine 179, cysteine 183–cysteine 215, cysteine 192–cysteine 209, and cysteine 200–cysteine 213. Residues 183–215 (CTREDEFINCNDLVKQGCQTDYLKSNCAASCFC) form the ShKT domain.

In terms of tissue distribution, expressed by the venom gland.

The protein localises to the secreted. Blocks contraction of smooth muscle elicited by high potassium-induced depolarization, but does not block caffeine-stimulated contraction. May target voltage-gated calcium channels in smooth muscle. This Echis coloratus (Carpet viper) protein is Cysteine-rich venom protein.